We begin with the raw amino-acid sequence, 273 residues long: Testis-specific serine/threonine-protein kinase 6 (273 aa).

Residues 12 to 267 (YKLGRTIGEG…AGQVARNGWL (256 aa)) form the Protein kinase domain. ATP-binding positions include 18 to 26 (IGEGSYSKV) and Lys41. Asp135 functions as the Proton acceptor in the catalytic mechanism.

It belongs to the protein kinase superfamily. CAMK Ser/Thr protein kinase family. In terms of assembly, microtubule inner protein component of sperm flagellar doublet microtubules. Interacts with HSP90; this interaction stabilizes and activates TSSK6. Interacts with the heat shock proteins HSPCB, HSPA8 and HSPA1A. These interactions appear to be required for TSSK6 kinase activity. Interacts with TSACC; this interaction is direct and recruits TSACC to HSP90, which is essential for kinase activity. The cofactor is Mg(2+). Autophosphorylated. In terms of processing, ubiquitinated; HSP90 activity negatively regulates ubiquitination and degradation. As to expression, expressed in the testis, localized to the heads of elongating spermatids.

Its subcellular location is the cytoplasm. The protein resides in the cytoskeleton. The protein localises to the flagellum axoneme. It localises to the nucleus. It catalyses the reaction L-seryl-[protein] + ATP = O-phospho-L-seryl-[protein] + ADP + H(+). It carries out the reaction L-threonyl-[protein] + ATP = O-phospho-L-threonyl-[protein] + ADP + H(+). Its function is as follows. Serine/threonine-protein kinase component of the sperm flagellar doublet microtubules. May act as a regulator of sperm motility by mediating phosphorylation of sperm doublet microtubule proteins. Plays a role in DNA condensation during postmeiotic chromatin remodeling and histone-to-protamine transition during spermatogenesis. This Mus musculus (Mouse) protein is Testis-specific serine/threonine-protein kinase 6.